A 102-amino-acid polypeptide reads, in one-letter code: Beta-defensin 116 (102 aa).

Residues 1 to 23 form the signal peptide; that stretch reads MSVMKPCLMTIAILMILAQKTPG. 3 cysteine pairs are disulfide-bonded: C40–C67, C47–C61, and C51–C68. The interval 83–102 is disordered; that stretch reads EDYDSNSNLSVTNSSSYSHI. A compositionally biased stretch (low complexity) spans 87 to 102; the sequence is SNSNLSVTNSSSYSHI.

The protein belongs to the beta-defensin family.

Its subcellular location is the secreted. Its function is as follows. Has antibacterial activity. The chain is Beta-defensin 116 (DEFB116) from Homo sapiens (Human).